A 542-amino-acid chain; its full sequence is Chaperonin GroEL 2 (542 aa).

ATP contacts are provided by residues 30-33 (TLGP), lysine 51, 87-91 (DGTTT), glycine 415, and aspartate 496. The segment at 523 to 542 (AEKPKKDGQPQMPPAPGMDF) is disordered. Residues 533–542 (QMPPAPGMDF) show a composition bias toward pro residues.

Belongs to the chaperonin (HSP60) family. Forms a cylinder of 14 subunits composed of two heptameric rings stacked back-to-back. Interacts with the co-chaperonin GroES.

It is found in the cytoplasm. The catalysed reaction is ATP + H2O + a folded polypeptide = ADP + phosphate + an unfolded polypeptide.. Functionally, together with its co-chaperonin GroES, plays an essential role in assisting protein folding. The GroEL-GroES system forms a nano-cage that allows encapsulation of the non-native substrate proteins and provides a physical environment optimized to promote and accelerate protein folding. This Sinorhizobium medicae (strain WSM419) (Ensifer medicae) protein is Chaperonin GroEL 2.